A 188-amino-acid polypeptide reads, in one-letter code: Elongation factor P (188 aa).

This sequence belongs to the elongation factor P family.

It is found in the cytoplasm. The protein operates within protein biosynthesis; polypeptide chain elongation. Functionally, involved in peptide bond synthesis. Stimulates efficient translation and peptide-bond synthesis on native or reconstituted 70S ribosomes in vitro. Probably functions indirectly by altering the affinity of the ribosome for aminoacyl-tRNA, thus increasing their reactivity as acceptors for peptidyl transferase. This is Elongation factor P from Exiguobacterium sp. (strain ATCC BAA-1283 / AT1b).